A 251-amino-acid polypeptide reads, in one-letter code: Cytochrome c oxidase subunit 2 (251 aa).

Residues 1 to 15 (MLDLLRLQLTTFIMN) constitute a propeptide, removed in mature form. Over 16–30 (DVPTPYACYFQDSAT) the chain is Mitochondrial intermembrane. The helical transmembrane segment at 31-64 (PNQEGILELHDNIMFYLLVILGLVSWMLYTIVMT) threads the bilayer. The Mitochondrial matrix portion of the chain corresponds to 65-78 (YSKNPIAYKYIKHG). The chain crosses the membrane as a helical span at residues 79-108 (QTIEVIWTIFPAVILLIIAFPSFILLYLCD). Residues 109-251 (EVISPAMTIK…PKFLEWLNEQ (143 aa)) lie on the Mitochondrial intermembrane side of the membrane. Residues histidine 186, cysteine 221, glutamate 223, cysteine 225, histidine 229, and methionine 232 each contribute to the Cu cation site. Glutamate 223 lines the Mg(2+) pocket.

This sequence belongs to the cytochrome c oxidase subunit 2 family. As to quaternary structure, component of the cytochrome c oxidase (complex IV, CIV), a multisubunit enzyme composed of 12 subunits. The complex is composed of a catalytic core of 3 subunits COX1, COX2 and COX3, encoded in the mitochondrial DNA, and 9 supernumerary subunits COX4, COX5A (or COX5B), COX6, COX7, COX8, COX9, COX12, COX13 and COX26, which are encoded in the nuclear genome. The complex exists as a monomer or a dimer and forms supercomplexes (SCs) in the inner mitochondrial membrane with a dimer of ubiquinol-cytochrome c oxidoreductase (cytochrome b-c1 complex, complex III, CIII), resulting in 2 different assemblies (supercomplexes III(2)IV and III(2)IV(2)). The cofactor is Cu cation. In terms of processing, the N-terminal sequence of COX2 is processed by IMP1.

The protein localises to the mitochondrion inner membrane. It carries out the reaction 4 Fe(II)-[cytochrome c] + O2 + 8 H(+)(in) = 4 Fe(III)-[cytochrome c] + 2 H2O + 4 H(+)(out). In terms of biological role, component of the cytochrome c oxidase, the last enzyme in the mitochondrial electron transport chain which drives oxidative phosphorylation. The respiratory chain contains 3 multisubunit complexes succinate dehydrogenase (complex II, CII), ubiquinol-cytochrome c oxidoreductase (cytochrome b-c1 complex, complex III, CIII) and cytochrome c oxidase (complex IV, CIV), that cooperate to transfer electrons derived from NADH and succinate to molecular oxygen, creating an electrochemical gradient over the inner membrane that drives transmembrane transport and the ATP synthase. Cytochrome c oxidase is the component of the respiratory chain that catalyzes the reduction of oxygen to water. Electrons originating from reduced cytochrome c in the intermembrane space (IMS) are transferred via the dinuclear copper A center (CU(A)) of COX2 and heme A of COX1 to the active site in COX1, a binuclear center (BNC) formed by heme A3 and copper B (CU(B)). The BNC reduces molecular oxygen to 2 water molecules unsing 4 electrons from cytochrome c in the IMS and 4 protons from the mitochondrial matrix. COX2 is a catalytic core subunit which transfers the electrons from cytochrome c via its dinuclear copper A center (CU(A)) to the BNC of the COX1. The sequence is that of Cytochrome c oxidase subunit 2 (COX2) from Saccharomyces cerevisiae (strain ATCC 204508 / S288c) (Baker's yeast).